Consider the following 1029-residue polypeptide: MKMADAKQKRNEQLKRWIGSETDLEPPVVKRQKTKVKFDDGAVFLAACSSGDTDEVLKLLHRGADINYANVDGLTALHQACIDDNVDMVKFLVENGANINQPDNEGWIPLHAAASCGYLDIAEFLIGQGAHVGAVNSEGDTPLDIAEEEAMEELLQNEVNRQGVDIEAARKEEERVMLRDARQWLNSGHISDVRHAKSGGTALHVAAAKGYTEVLKLLIQAGYDVNIKDYDGWTPLHAAAHWGKEEACRILVDNLCDMETVNKVGQTAFDVADEDILGYLEELQKKQTLLHSEKRDKKSPLIESTANMENNQPQKAFKNKETLIIEPEKNASRIESLEHEKADEEEEGKKDESSCSSEEDEEDDSESEAETDKTKPMASVSNAHTSSTQAAPAAVTAPTLSSNQGTPTSPVKKFPISTTKISPKEEERKDESPASWRLGLRKTGSYGALAEISASKEAQKEKDTAGVMRSASSPRLSSSLDNKEKEKDNKGTRLAYVTPTIPRRLASTSDIEEKENRESSSLRTSSSYTRRKWEDDLKKNSSINEGSTYHRSCSFGRRQDDLISCSVPSTTSTPTVTSAAGLQRSLPSSTSTAAKTPPGSSSAGTQSSTSNRLWAEDSTEKEKDSAPTAVTIPVAPTVVNAAAPSTTTLTTTTAGTVSEVRERRRSYLTPVRDEESESQRKARSRQARQSRRSTQGVTLTDLQEAEKTIGRSRSTRTREQENEEKEKEEKEKQDKEKQEEKKESEASREDEYKQKYSRTYDETYTRYRPVSTSSSSAPSSSSLSTLGSTLYASSQLNRPNSLVGITSAYSRGLAKENEREGEKKEEEKEGEDKSQPKSIRERRRPREKRRSTGVSFWTQDSDENEQERQSDTEDGSSKRETQTDSVSRYDSSSTSSSDRYDSLLGRSASYSYLEDRKPYSSRLEKDDSTDFKKLYEQILAENEKLKAQLHDTNMELTDLKLQLEKATQRQERFADRSQLEMEKRERRALERRISEMEEELKMLPDLKADNQRLKDENGALIRVISKLSK.

Residues 35-38 (KVKF) carry the KVKF motif motif. 6 ANK repeats span residues 39 to 68 (DDGA…DINY), 72 to 101 (DGLT…NINQ), 105 to 134 (EGWI…HVGA), 138 to 164 (EGDT…RQGV), 198 to 227 (SGGT…DVNI), and 231 to 260 (DGWT…DMET). (3S)-3-hydroxyasparagine; by HIF1AN occurs at positions 67 and 100. N226 is subject to (3S)-3-hydroxyasparagine; by HIF1AN. A disordered region spans residues 290–786 (LHSEKRDKKS…APSSSSLSTL (497 aa)). Over residues 291-300 (HSEKRDKKSP) the composition is skewed to basic and acidic residues. Phosphoserine is present on S299. Residues 302–314 (IESTANMENNQPQ) are compositionally biased toward polar residues. Residues 318–353 (KNKETLIIEPEKNASRIESLEHEKADEEEEGKKDES) show a composition bias toward basic and acidic residues. Over residues 357 to 369 (SEEDEEDDSESEA) the composition is skewed to acidic residues. The segment covering 385–402 (TSSTQAAPAAVTAPTLSS) has biased composition (low complexity). Phosphoserine is present on residues S422 and S432. The segment covering 422–432 (SPKEEERKDES) has biased composition (basic and acidic residues). T443 is modified (phosphothreonine). The residue at position 445 (S445) is a Phosphoserine; by NUAK1. A Phosphotyrosine modification is found at Y446. The segment covering 469–480 (RSASSPRLSSSL) has biased composition (low complexity). S472 is modified (phosphoserine; by NUAK1). Position 473 is a phosphoserine; by CDK1 (S473). S477 carries the post-translational modification Phosphoserine. Residues 481–491 (DNKEKEKDNKG) show a composition bias toward basic and acidic residues. A phosphoserine mark is found at S507 and S509. Residues 540 to 551 (NSSINEGSTYHR) show a composition bias toward polar residues. Low complexity predominate over residues 564-578 (SCSVPSTTSTPTVTS). Positions 585–594 (SLPSSTSTAA) are enriched in polar residues. Residues 596-610 (TPPGSSSAGTQSSTS) are compositionally biased toward low complexity. A phosphoserine mark is found at S601 and S618. Residues 614–625 (WAEDSTEKEKDS) are compositionally biased toward basic and acidic residues. The segment covering 626-656 (APTAVTIPVAPTVVNAAAPSTTTLTTTTAGT) has biased composition (low complexity). Residues 671 to 680 (VRDEESESQR) are compositionally biased toward basic and acidic residues. An interaction with ROCK2 region spans residues 680–863 (RKARSRQARQ…VSFWTQDSDE (184 aa)). The segment covering 681–691 (KARSRQARQSR) has biased composition (basic residues). Phosphoserine; by PKA and PKG; in vitro occurs at positions 690 and 693. T694 carries the phosphothreonine; by ROCK1, ROCK2, CDC42BP, ZIPK/DAPK3 and RAF1 modification. The span at 716-765 (RTREQENEEKEKEEKEKQDKEKQEEKKESEASREDEYKQKYSRTYDETYT) shows a compositional bias: basic and acidic residues. Low complexity predominate over residues 771-786 (STSSSSAPSSSSLSTL). S801 bears the Phosphoserine mark. Residues 808-927 (AYSRGLAKEN…PYSSRLEKDD (120 aa)) form a disordered region. Residues 813–839 (LAKENEREGEKKEEEKEGEDKSQPKSI) are compositionally biased toward basic and acidic residues. Over residues 840–851 (RERRRPREKRRS) the composition is skewed to basic residues. Position 851 is a phosphoserine; by ROCK2 (S851). Residues S861 and S870 each carry the phosphoserine modification. A compositionally biased stretch (basic and acidic residues) spans 866 to 882 (QERQSDTEDGSSKRETQ). Residues 883-897 (TDSVSRYDSSSTSSS) show a composition bias toward low complexity. 2 positions are modified to phosphoserine: S902 and S907. S909 carries the post-translational modification Phosphoserine; by NUAK1. Positions 913-927 (LEDRKPYSSRLEKDD) are enriched in basic and acidic residues. S994 is subject to Phosphoserine.

In terms of assembly, PP1 comprises a catalytic subunit, PPP1CA, PPP1CB or PPP1CC, and one or several targeting or regulatory subunits. PPP1R12A mediates binding to myosin. Interacts with ARHA and CIT. Binds PPP1R12B, ROCK1 and IL16. Interacts directly with PRKG1. Non-covalent dimer of 2 dimers; PRKG1-PRKG1 and PPP1R12A-PPP1R12A. Interacts with SMTNL1. Interacts with PPP1CB; the interaction is direct. Interacts (when phosphorylated at Ser-445, Ser-472 and Ser-910) with 14-3-3. Interacts with ROCK1 and ROCK2. Interacts with isoform 1 and isoform 2 of ZIPK/DAPK3. Interacts with RAF1. Interacts with HIF1AN. Interacts with NCKAP1L. Phosphorylated by CIT (Rho-associated kinase). Phosphorylated cooperatively by ROCK1 and CDC42BP on Thr-694. Phosphorylated on upon DNA damage, probably by ATM or ATR. In vitro, phosphorylation of Ser-693 by PKA and PKG appears to prevent phosphorylation of the inhibitory site Thr-694, probably mediated by PRKG1. Phosphorylation at Ser-445, Ser-472 and Ser-909 by NUAK1 promotes interaction with 14-3-3, leading to inhibit interaction with myosin light chain MLC2, preventing dephosphorylation of MLC2. May be phosphorylated at Thr-694 by DMPK; may inhibit the myosin phosphatase activity. Phosphorylated at Ser-473 by CDK1 during mitosis, creating docking sites for the POLO box domains of PLK1. Subsequently, PLK1 binds and phosphorylates PPP1R12A. In terms of tissue distribution, expressed in striated and vascular smooth muscle, specificcally in type 2a fibers (at protein level). Expression levels are 20-30% higher in developed males than females (at protein level).

It is found in the cytoplasm. Its subcellular location is the cytoskeleton. The protein localises to the stress fiber. Its function is as follows. Key regulator of protein phosphatase 1C (PPP1C). Mediates binding to myosin. As part of the PPP1C complex, involved in dephosphorylation of PLK1. Capable of inhibiting HIF1AN-dependent suppression of HIF1A activity. This chain is Protein phosphatase 1 regulatory subunit 12A, found in Mus musculus (Mouse).